Consider the following 218-residue polypeptide: MLTVALPKGALLKDSIRLLQSVGLDFSAFLDSGNRQLQIQDPTQTAQGLLVRAQDVPVYVEYGQAQLGIVGFDVLQEKKPQVAQFADLGFGHCRMSVAVPSQSPYRSAMELPPNCRVASKFVHCAHDFFSKIDLPVEIIPLYGSVELGPITGMSEAIVDLVSTGRTLKENGLIELDCLYDSTARLIAHPLSYRLNQYNLEHWLNEISKNSQPLAAKAS.

Belongs to the ATP phosphoribosyltransferase family. Short subfamily. As to quaternary structure, heteromultimer composed of HisG and HisZ subunits.

Its subcellular location is the cytoplasm. It carries out the reaction 1-(5-phospho-beta-D-ribosyl)-ATP + diphosphate = 5-phospho-alpha-D-ribose 1-diphosphate + ATP. It participates in amino-acid biosynthesis; L-histidine biosynthesis; L-histidine from 5-phospho-alpha-D-ribose 1-diphosphate: step 1/9. Catalyzes the condensation of ATP and 5-phosphoribose 1-diphosphate to form N'-(5'-phosphoribosyl)-ATP (PR-ATP). Has a crucial role in the pathway because the rate of histidine biosynthesis seems to be controlled primarily by regulation of HisG enzymatic activity. In Acaryochloris marina (strain MBIC 11017), this protein is ATP phosphoribosyltransferase.